Consider the following 935-residue polypeptide: Progesterone receptor (935 aa).

The tract at residues 1–49 is disordered; the sequence is MTELKAKGXRAPHVAGSPSSPKVXSPLPCRQAAXPFPGSQTSDTLPEVS. The segment at 1–164 is AF3; mediates transcriptional activation; that stretch reads MTELKAKGXR…SATQRVLSRL (164 aa). The modulating, Pro-Rich stretch occupies residues 1-568; the sequence is MTELKAKGXR…YSFESLPQKI (568 aa). The span at 17–28 shows a compositional bias: low complexity; it reads SPSSPKVXSPLP. Serine 20 carries the post-translational modification Phosphoserine. The LXXL motif 1 signature appears at 55–59; that stretch reads LDGLL. Residues 61 to 255 are disordered; the sequence is PRICQGQDPP…GAAAGGGAAA (195 aa). Residue serine 81 is modified to Phosphoserine. Residues 115–119 carry the LXXL motif 2 motif; sequence LDTLW. Phosphoserine occurs at positions 130 and 162. Positions 165–305 are mediates transcriptional transrepression; sequence MSRSGGKAGD…LATTVTDFIH (141 aa). Residues 183-187 carry the Nuclear localization signal motif; that stretch reads KVLPR. Phosphoserine is present on serine 190. The segment covering 191–203 has biased composition (polar residues); that stretch reads PSRQLLLPTTGSP. Serine 213 bears the Phosphoserine mark. Residues 220-231 show a composition bias toward acidic residues; that stretch reads EVEEEDGSESED. Low complexity predominate over residues 232–246; it reads SAGPLLKGKPRALGG. Serine 294 is subject to Phosphoserine; by MAPK1. Positions 331–365 are disordered; it reads GGAGAASAFAPPRSSPSASSTPVPGGDFPDCAYAP. Residues 335–356 are compositionally biased toward low complexity; the sequence is AASAFAPPRSSPSASSTPVPGG. Serine 345 carries the post-translational modification Phosphoserine; by MAPK. Lysine 388 participates in a covalent cross-link: Glycyl lysine isopeptide (Lys-Gly) (interchain with G-Cter in SUMO); alternate. Lysine 388 participates in a covalent cross-link: Glycyl lysine isopeptide (Lys-Gly) (interchain with G-Cter in ubiquitin); alternate. The residue at position 400 (serine 400) is a Phosphoserine; by CDK2. The interval 415–452 is disordered; sequence PDFPLGPPPPLPPRAPPSRPGEAAVTAAPASASVSSAS. Positions 418-433 are enriched in pro residues; that stretch reads PLGPPPPLPPRAPPSR. Residues 434-452 show a composition bias toward low complexity; sequence PGEAAVTAAPASASVSSAS. An AF1; mediates transcriptional activation region spans residues 456–548; it reads STLECILYKA…VYPPYLNYLR (93 aa). Residue lysine 533 forms a Glycyl lysine isopeptide (Lys-Gly) (interchain with G-Cter in SUMO) linkage. 2 consecutive NR C4-type zinc fingers follow at residues 569–589 and 605–629; these read CLIC…CGSC and CAGR…LRKC. Residues 569–641 constitute a DNA-binding region (nuclear receptor); sequence CLICGDEASG…AGMVLGGRKF (73 aa). Phosphoserine is present on serine 678. In terms of domain architecture, NR LBD spans 681-915; that stretch reads QDIQLIPPLI…EFPEMMSEVI (235 aa). The interval 689 to 935 is AF2; mediates transcriptional activation; the sequence is LINLLLSIEP…MVKPLLFHKK (247 aa).

The protein belongs to the nuclear hormone receptor family. As to quaternary structure, interacts with SMARD1 and UNC45A. Interacts with CUEDC2; the interaction promotes ubiquitination, decreases sumoylation, and represses transcriptional activity. Interacts with PIAS3; the interaction promotes sumoylation of PR in a hormone-dependent manner, inhibits DNA-binding, and alters nuclear export. Interacts with SP1; the interaction requires ligand-induced phosphorylation on Ser-345 by ERK1/2-MAPK. Interacts with PRMT2. Interacts with NCOA2 and NCOA1. Interacts with KLF9. Interacts with GTF2B. Post-translationally, phosphorylated on multiple serine sites. Several of these sites are hormone-dependent. Phosphorylation on Ser-294 is highly hormone-dependent and modulates ubiquitination and sumoylation on Lys-388. Phosphorylation on Ser-345 also requires induction by hormone. Basal phosphorylation on Ser-81, Ser-162, Ser-190 and Ser-400 is increased in response to progesterone and can be phosphorylated in vitro by the CDK2-A1 complex. Increased levels of phosphorylation on Ser-400 also in the presence of EGF, heregulin, IGF, PMA and FBS. Phosphorylation at this site by CDK2 is ligand-independent, and increases nuclear translocation and transcriptional activity. Phosphorylation at Ser-162 and Ser-294, but not at Ser-190, is impaired during the G(2)/M phase of the cell cycle. Phosphorylation on Ser-345 by ERK1/2 MAPK is required for interaction with SP1. In terms of processing, sumoylation is hormone-dependent and represses transcriptional activity. Sumoylation on all three sites is enhanced by PIAS3. Desumoylated by SENP1. Sumoylation on Lys-388, the main site of sumoylation, is repressed by ubiquitination on the same site, and modulated by phosphorylation at Ser-294. Ubiquitination is hormone-dependent and represses sumoylation on the same site. Promoted by MAPK-mediated phosphorylation on Ser-294. Post-translationally, palmitoylated by ZDHHC7 and ZDHHC21. Palmitoylation is required for plasma membrane targeting and for rapid intracellular signaling via ERK and AKT kinases and cAMP generation.

It is found in the nucleus. The protein resides in the cytoplasm. The steroid hormones and their receptors are involved in the regulation of eukaryotic gene expression and affect cellular proliferation and differentiation in target tissues. Transcriptional activator of several progesteron-dependent promoters in a variety of cell types. Involved in activation of SRC-dependent MAPK signaling on hormone stimulation. This chain is Progesterone receptor (PGR), found in Ateles paniscus (Black spider monkey).